The primary structure comprises 376 residues: Serine/threonine-protein kinase-transforming protein mos (376 aa).

One can recognise a Protein kinase domain in the interval 94 to 376 (VCLMHRLGSG…KALADSIEPM (283 aa)). Residues 100–108 (LGSGGFGSV) and lysine 121 contribute to the ATP site. Aspartate 229 serves as the catalytic Proton acceptor.

It belongs to the protein kinase superfamily. Ser/Thr protein kinase family.

The enzyme catalyses L-seryl-[protein] + ATP = O-phospho-L-seryl-[protein] + ADP + H(+). It catalyses the reaction L-threonyl-[protein] + ATP = O-phospho-L-threonyl-[protein] + ADP + H(+). In Moloney murine sarcoma virus (strain m1) (MoMSV), this protein is Serine/threonine-protein kinase-transforming protein mos (V-MOS).